Consider the following 111-residue polypeptide: Cytochrome c6 (111 aa).

The signal sequence occupies residues 1-25 (MKRLLSLIFLVFVFFAVMLTPPALA). 4 residues coordinate heme c: Cys39, Cys42, His43, and Met83.

Belongs to the cytochrome c family. PetJ subfamily. As to quaternary structure, monomer. Post-translationally, binds 1 heme c group covalently per subunit.

Its subcellular location is the cellular thylakoid lumen. Functionally, functions as an electron carrier between membrane-bound cytochrome b6-f and photosystem I in oxygenic photosynthesis. The chain is Cytochrome c6 from Rippkaea orientalis (strain PCC 8801 / RF-1) (Cyanothece sp. (strain PCC 8801)).